A 251-amino-acid polypeptide reads, in one-letter code: ATP synthase subunit a (251 aa).

Transmembrane regions (helical) follow at residues 28 to 48, 84 to 104, 130 to 150, 192 to 212, and 220 to 240; these read TDTV…AFFL, IAPF…ISNW, INYV…AGIW, IFAG…IMWA, and FDLF…ILYF.

The protein belongs to the ATPase A chain family. F-type ATPases have 2 components, CF(1) - the catalytic core - and CF(0) - the membrane proton channel. CF(1) has five subunits: alpha(3), beta(3), gamma(1), delta(1), epsilon(1). CF(0) has three main subunits: a(1), b(2) and c(9-12). The alpha and beta chains form an alternating ring which encloses part of the gamma chain. CF(1) is attached to CF(0) by a central stalk formed by the gamma and epsilon chains, while a peripheral stalk is formed by the delta and b chains.

Its subcellular location is the cell membrane. Key component of the proton channel; it plays a direct role in the translocation of protons across the membrane. This is ATP synthase subunit a from Mycobacterium leprae (strain TN).